The following is a 490-amino-acid chain: GTPase Der (490 aa).

EngA-type G domains lie at 3 to 166 (PVVA…MEDL) and 203 to 376 (IKLA…DSST). GTP contacts are provided by residues 9–16 (GRPNVGKS), 56–60 (DTGGI), 118–121 (NKTD), 209–216 (GRPNVGKS), 256–260 (DTAGV), and 321–324 (NKWD). The 85-residue stretch at 377–461 (RRVGTSMLTR…PIRIQFKEGE (85 aa)) folds into the KH-like domain.

It belongs to the TRAFAC class TrmE-Era-EngA-EngB-Septin-like GTPase superfamily. EngA (Der) GTPase family. As to quaternary structure, associates with the 50S ribosomal subunit.

Functionally, GTPase that plays an essential role in the late steps of ribosome biogenesis. This is GTPase Der from Escherichia fergusonii (strain ATCC 35469 / DSM 13698 / CCUG 18766 / IAM 14443 / JCM 21226 / LMG 7866 / NBRC 102419 / NCTC 12128 / CDC 0568-73).